A 160-amino-acid chain; its full sequence is UPF0178 protein BB1267 (160 aa).

Belongs to the UPF0178 family.

This is UPF0178 protein BB1267 from Bordetella bronchiseptica (strain ATCC BAA-588 / NCTC 13252 / RB50) (Alcaligenes bronchisepticus).